Reading from the N-terminus, the 103-residue chain is Large ribosomal subunit protein eL14 (103 aa).

It belongs to the eukaryotic ribosomal protein eL14 family.

In Pyrobaculum aerophilum (strain ATCC 51768 / DSM 7523 / JCM 9630 / CIP 104966 / NBRC 100827 / IM2), this protein is Large ribosomal subunit protein eL14.